A 169-amino-acid chain; its full sequence is Cytochrome c oxidase subunit 4 isoform 1, mitochondrial (169 aa).

A mitochondrion-targeting transit peptide spans 1–22 (MLASRALSLIGKRAISTSVCLR). Topologically, residues 23 to 99 (AHGSVVKSED…FAEMNRGTNE (77 aa)) are mitochondrial matrix. Residue Lys29 is modified to N6-acetyllysine; alternate. Lys29 bears the N6-succinyllysine; alternate mark. Phosphoserine is present on residues Ser56 and Ser58. At Lys60 the chain carries N6-acetyllysine; alternate. An N6-succinyllysine; alternate modification is found at Lys60. An N6-acetyllysine modification is found at Lys67. A helical membrane pass occupies residues 100–125 (WKTVVGMAMFFIGFTALVLIWEKSYV). At 126 to 169 (YGPIPHTFDRDWVAMQTKRMLDMKANPIQGFSAKWDYDKNEWKK) the chain is on the mitochondrial intermembrane side.

Belongs to the cytochrome c oxidase IV family. As to quaternary structure, component of the cytochrome c oxidase (complex IV, CIV), a multisubunit enzyme composed of 14 subunits. The complex is composed of a catalytic core of 3 subunits MT-CO1, MT-CO2 and MT-CO3, encoded in the mitochondrial DNA, and 11 supernumerary subunits COX4I, COX5A, COX5B, COX6A, COX6B, COX6C, COX7A, COX7B, COX7C, COX8 and NDUFA4, which are encoded in the nuclear genome. The complex exists as a monomer or a dimer and forms supercomplexes (SCs) in the inner mitochondrial membrane with NADH-ubiquinone oxidoreductase (complex I, CI) and ubiquinol-cytochrome c oxidoreductase (cytochrome b-c1 complex, complex III, CIII), resulting in different assemblies (supercomplex SCI(1)III(2)IV(1) and megacomplex MCI(2)III(2)IV(2)). Interacts with PHB2; the interaction decreases in absence of SPHK2. Interacts with AFG1L. Interacts with ABCB7; this interaction allows the regulation of cellular iron homeostasis and cellular reactive oxygen species (ROS) levels in cardiomyocytes. Interacts with FLVCR2; this interaction occurs in the absence of heme and is disrupted upon heme binding. Interacts with IRGC.

The protein resides in the mitochondrion inner membrane. It functions in the pathway energy metabolism; oxidative phosphorylation. Functionally, component of the cytochrome c oxidase, the last enzyme in the mitochondrial electron transport chain which drives oxidative phosphorylation. The respiratory chain contains 3 multisubunit complexes succinate dehydrogenase (complex II, CII), ubiquinol-cytochrome c oxidoreductase (cytochrome b-c1 complex, complex III, CIII) and cytochrome c oxidase (complex IV, CIV), that cooperate to transfer electrons derived from NADH and succinate to molecular oxygen, creating an electrochemical gradient over the inner membrane that drives transmembrane transport and the ATP synthase. Cytochrome c oxidase is the component of the respiratory chain that catalyzes the reduction of oxygen to water. Electrons originating from reduced cytochrome c in the intermembrane space (IMS) are transferred via the dinuclear copper A center (CU(A)) of subunit 2 and heme A of subunit 1 to the active site in subunit 1, a binuclear center (BNC) formed by heme A3 and copper B (CU(B)). The BNC reduces molecular oxygen to 2 water molecules using 4 electrons from cytochrome c in the IMS and 4 protons from the mitochondrial matrix. The chain is Cytochrome c oxidase subunit 4 isoform 1, mitochondrial (Cox4i1) from Mus musculus (Mouse).